A 237-amino-acid chain; its full sequence is Aspartate/glutamate leucyltransferase (237 aa).

This sequence belongs to the R-transferase family. Bpt subfamily.

The protein resides in the cytoplasm. The catalysed reaction is N-terminal L-glutamyl-[protein] + L-leucyl-tRNA(Leu) = N-terminal L-leucyl-L-glutamyl-[protein] + tRNA(Leu) + H(+). The enzyme catalyses N-terminal L-aspartyl-[protein] + L-leucyl-tRNA(Leu) = N-terminal L-leucyl-L-aspartyl-[protein] + tRNA(Leu) + H(+). Functionally, functions in the N-end rule pathway of protein degradation where it conjugates Leu from its aminoacyl-tRNA to the N-termini of proteins containing an N-terminal aspartate or glutamate. The chain is Aspartate/glutamate leucyltransferase from Marinobacter nauticus (strain ATCC 700491 / DSM 11845 / VT8) (Marinobacter aquaeolei).